A 1632-amino-acid polypeptide reads, in one-letter code: Guanine exchange factor for Rac 30 (1632 aa).

Residues 16 to 122 (NIQIDSFTSW…VIFLLIQKIK (107 aa)) form the Calponin-homology (CH) domain. 2 disordered regions span residues 134–155 (QGETTGTTTTITSTNTTTTPTK) and 171–285 (FSHI…PTTG). Composition is skewed to low complexity over residues 137 to 154 (TTGTTTTITSTNTTTTPT) and 180 to 284 (QSSS…SPTT). IQ domains lie at 388–417 (DLKKIIFMQSVIRGYLVRSKWRNVLEKYKQ) and 432–461 (AYRGLIRVQAIVKGKIQRKKLFKMFPLYRR). The DH domain occupies 460–638 (RRNEIVKEIL…KDVAEYVNEK (179 aa)). Over residues 775–795 (QINNQNNNQNNNQNNNLNNNN) the composition is skewed to low complexity. The interval 775–798 (QINNQNNNQNNNQNNNLNNNNDDS) is disordered. Positions 940 to 1038 (DSEFSNVLEK…WISLIRLSIK (99 aa)) constitute a PH 1 domain. A compositionally biased stretch (low complexity) spans 1138 to 1156 (STSASQSQSQSPSPSPSHS). Positions 1138-1161 (STSASQSQSQSPSPSPSHSINQKQ) are disordered. Residues 1271 to 1389 (NSCGDNINND…NNNNNNSQNG (119 aa)) enclose the Arf-GAP domain. The C4-type zinc finger occupies 1286 to 1309 (CAECGASDPSWVSINYGVVVCLDC). Composition is skewed to low complexity over residues 1380–1402 (NNNNNNSQNGDSTTPTPTPTSTT), 1409–1431 (STPTSPNLNSQSSPPPTATTTQT), and 1441–1481 (SSPT…TTPT). Positions 1380 to 1521 (NNNNNNSQNG…SSHAITERKT (142 aa)) are disordered. The span at 1500–1515 (DTSNGKGTWSRGSSHA) shows a compositional bias: polar residues. The PH 2 domain occupies 1532-1631 (KKEHQGYLFK…WLDVLSSHTT (100 aa)).

Its subcellular location is the membrane. It localises to the cytoplasmic vesicle. It is found in the phagosome membrane. Its function is as follows. GTPase-activating protein for Rac involved in streaming and development. This is Guanine exchange factor for Rac 30 (gxcDD) from Dictyostelium discoideum (Social amoeba).